Here is a 231-residue protein sequence, read N- to C-terminus: Superoxide dismutase [Mn], mitochondrial (231 aa).

The N-terminal 27 residues, M1–G27, are a transit peptide targeting the mitochondrion. Mn(2+) contacts are provided by H55, H103, D192, and H196.

It belongs to the iron/manganese superoxide dismutase family. Homotetramer. Mn(2+) serves as cofactor.

Its subcellular location is the mitochondrion matrix. The catalysed reaction is 2 superoxide + 2 H(+) = H2O2 + O2. In terms of biological role, destroys superoxide anion radicals which are normally produced within the cells and which are toxic to biological systems. The polypeptide is Superoxide dismutase [Mn], mitochondrial (SODA) (Oryza sativa subsp. japonica (Rice)).